Here is a 149-residue protein sequence, read N- to C-terminus: Transcriptional repressor NrdR (149 aa).

The segment at 3-34 (CPFCDTEETKVIDSRLVSDGYQVRRRRECGHC) is a zinc-finger region. The region spanning 49–139 (PKIIKTDGTR…VYLSFDDIDQ (91 aa)) is the ATP-cone domain.

This sequence belongs to the NrdR family. Requires Zn(2+) as cofactor.

In terms of biological role, negatively regulates transcription of bacterial ribonucleotide reductase nrd genes and operons by binding to NrdR-boxes. In Haemophilus influenzae (strain PittEE), this protein is Transcriptional repressor NrdR.